The primary structure comprises 464 residues: Asparagine--tRNA ligase (464 aa).

The protein belongs to the class-II aminoacyl-tRNA synthetase family. In terms of assembly, homodimer.

Its subcellular location is the cytoplasm. It catalyses the reaction tRNA(Asn) + L-asparagine + ATP = L-asparaginyl-tRNA(Asn) + AMP + diphosphate + H(+). This is Asparagine--tRNA ligase from Acetivibrio thermocellus (strain ATCC 27405 / DSM 1237 / JCM 9322 / NBRC 103400 / NCIMB 10682 / NRRL B-4536 / VPI 7372) (Clostridium thermocellum).